Reading from the N-terminus, the 172-residue chain is Adenine phosphoribosyltransferase (172 aa).

This sequence belongs to the purine/pyrimidine phosphoribosyltransferase family. Homodimer.

Its subcellular location is the cytoplasm. It catalyses the reaction AMP + diphosphate = 5-phospho-alpha-D-ribose 1-diphosphate + adenine. The protein operates within purine metabolism; AMP biosynthesis via salvage pathway; AMP from adenine: step 1/1. Functionally, catalyzes a salvage reaction resulting in the formation of AMP, that is energically less costly than de novo synthesis. The polypeptide is Adenine phosphoribosyltransferase (Exiguobacterium sibiricum (strain DSM 17290 / CCUG 55495 / CIP 109462 / JCM 13490 / 255-15)).